The primary structure comprises 464 residues: Siroheme synthase (464 aa).

The precorrin-2 dehydrogenase /sirohydrochlorin ferrochelatase stretch occupies residues 1 to 203 (MEFLPLFHNL…GQGAEAERML (203 aa)). NAD(+) contacts are provided by residues 22 to 23 (EI) and 43 to 44 (PE). S128 is subject to Phosphoserine. A uroporphyrinogen-III C-methyltransferase region spans residues 216 to 464 (GEVYLVGAGP…AWFEGAQATL (249 aa)). Residue P225 coordinates S-adenosyl-L-methionine. D248 functions as the Proton acceptor in the catalytic mechanism. K270 serves as the catalytic Proton donor. Residues 301–303 (GGD), I306, 331–332 (TA), M383, and G412 each bind S-adenosyl-L-methionine.

It in the N-terminal section; belongs to the precorrin-2 dehydrogenase / sirohydrochlorin ferrochelatase family. In the C-terminal section; belongs to the precorrin methyltransferase family.

The enzyme catalyses uroporphyrinogen III + 2 S-adenosyl-L-methionine = precorrin-2 + 2 S-adenosyl-L-homocysteine + H(+). The catalysed reaction is precorrin-2 + NAD(+) = sirohydrochlorin + NADH + 2 H(+). It catalyses the reaction siroheme + 2 H(+) = sirohydrochlorin + Fe(2+). Its pathway is cofactor biosynthesis; adenosylcobalamin biosynthesis; precorrin-2 from uroporphyrinogen III: step 1/1. It participates in cofactor biosynthesis; adenosylcobalamin biosynthesis; sirohydrochlorin from precorrin-2: step 1/1. It functions in the pathway porphyrin-containing compound metabolism; siroheme biosynthesis; precorrin-2 from uroporphyrinogen III: step 1/1. The protein operates within porphyrin-containing compound metabolism; siroheme biosynthesis; siroheme from sirohydrochlorin: step 1/1. Its pathway is porphyrin-containing compound metabolism; siroheme biosynthesis; sirohydrochlorin from precorrin-2: step 1/1. Functionally, multifunctional enzyme that catalyzes the SAM-dependent methylations of uroporphyrinogen III at position C-2 and C-7 to form precorrin-2 via precorrin-1. Then it catalyzes the NAD-dependent ring dehydrogenation of precorrin-2 to yield sirohydrochlorin. Finally, it catalyzes the ferrochelation of sirohydrochlorin to yield siroheme. This chain is Siroheme synthase, found in Pseudomonas syringae pv. syringae (strain B728a).